The primary structure comprises 234 residues: 7-cyano-7-deazaguanine synthase (234 aa).

An ATP-binding site is contributed by 13 to 23 (FSGGIDSTTCL). Positions 197, 207, 210, and 213 each coordinate Zn(2+).

This sequence belongs to the QueC family. Requires Zn(2+) as cofactor.

The catalysed reaction is 7-carboxy-7-deazaguanine + NH4(+) + ATP = 7-cyano-7-deazaguanine + ADP + phosphate + H2O + H(+). It functions in the pathway purine metabolism; 7-cyano-7-deazaguanine biosynthesis. Functionally, catalyzes the ATP-dependent conversion of 7-carboxy-7-deazaguanine (CDG) to 7-cyano-7-deazaguanine (preQ(0)). The chain is 7-cyano-7-deazaguanine synthase from Syntrophobacter fumaroxidans (strain DSM 10017 / MPOB).